Consider the following 140-residue polypeptide: Putative pre-16S rRNA nuclease (140 aa).

Belongs to the YqgF nuclease family.

It is found in the cytoplasm. In terms of biological role, could be a nuclease involved in processing of the 5'-end of pre-16S rRNA. This chain is Putative pre-16S rRNA nuclease, found in Serratia proteamaculans (strain 568).